The following is a 318-amino-acid chain: D-alanine--D-alanine ligase (318 aa).

The region spanning 101–307 (KKIIQYEGLP…FPDLIEKLVE (207 aa)) is the ATP-grasp domain. 135 to 190 (CREMGLPLVVKAPTQGSTIGMSFVHKEEDMAGALELAYDYDPVALVEQFIRGTEVT) is an ATP binding site. Mg(2+) is bound by residues Asp261, Glu274, and Asn276.

Belongs to the D-alanine--D-alanine ligase family. Mg(2+) is required as a cofactor. Mn(2+) serves as cofactor.

It is found in the cytoplasm. It carries out the reaction 2 D-alanine + ATP = D-alanyl-D-alanine + ADP + phosphate + H(+). It participates in cell wall biogenesis; peptidoglycan biosynthesis. Its function is as follows. Cell wall formation. The chain is D-alanine--D-alanine ligase from Pelotomaculum thermopropionicum (strain DSM 13744 / JCM 10971 / SI).